The primary structure comprises 414 residues: tRNA methyltransferase 10 homolog C (414 aa).

The transit peptide at 1-35 (MNVTVRFLRPFARYLVPYTFHRTRSNSYSRVLQRY) directs the protein to the mitochondrion. Ser79 bears the Phosphoserine mark. Residues 133-162 (GKEMMKKAKQMKKEMKAAAREEAKRARSLE) are a coiled coil. The SAM-dependent MTase TRM10-type domain maps to 186–378 (LGWKGVQAMQ…KFVPRRKHTG (193 aa)).

It belongs to the class IV-like SAM-binding methyltransferase superfamily. TRM10 family. In terms of assembly, component of mitochondrial ribonuclease P, a complex composed of TRMT10C/MRPP1, HSD17B10/MRPP2 and PRORP/MRPP3. Interacts with HSD17B10/MRPP2; forming the MRPP1-MRPP2 subcomplex of the mitochondrial ribonuclease P complex. Interacts with GRSF1.

The protein resides in the mitochondrion matrix. Its subcellular location is the mitochondrion nucleoid. The catalysed reaction is adenosine(9) in tRNA + S-adenosyl-L-methionine = N(1)-methyladenosine(9) in tRNA + S-adenosyl-L-homocysteine + H(+). It catalyses the reaction guanosine(9) in tRNA + S-adenosyl-L-methionine = N(1)-methylguanosine(9) in tRNA + S-adenosyl-L-homocysteine + H(+). The enzyme catalyses an adenosine in mRNA + S-adenosyl-L-methionine = an N(1)-methyladenosine in mRNA + S-adenosyl-L-homocysteine + H(+). Mitochondrial tRNA N(1)-methyltransferase involved in mitochondrial tRNA maturation. Component of mitochondrial ribonuclease P, a complex composed of TRMT10C/MRPP1, HSD17B10/MRPP2 and PRORP/MRPP3, which cleaves tRNA molecules in their 5'-ends. Together with HSD17B10/MRPP2, forms a subcomplex of the mitochondrial ribonuclease P, named MRPP1-MRPP2 subcomplex, which displays functions that are independent of the ribonuclease P activity. The MRPP1-MRPP2 subcomplex catalyzes the formation of N(1)-methylguanine and N(1)-methyladenine at position 9 (m1G9 and m1A9, respectively) in tRNAs; TRMT10C/MRPP1 acting as the catalytic N(1)-methyltransferase subunit. The MRPP1-MRPP2 subcomplex also acts as a tRNA maturation platform: following 5'-end cleavage by the mitochondrial ribonuclease P complex, the MRPP1-MRPP2 subcomplex enhances the efficiency of 3'-processing catalyzed by ELAC2, retains the tRNA product after ELAC2 processing and presents the nascent tRNA to the mitochondrial CCA tRNA nucleotidyltransferase TRNT1 enzyme. In addition to tRNA N(1)-methyltransferase activity, TRMT10C/MRPP1 also acts as a mRNA N(1)-methyltransferase by mediating methylation of adenosine residues at the N(1) position of MT-ND5 mRNA. Associates with mitochondrial DNA complexes at the nucleoids to initiate RNA processing and ribosome assembly. This chain is tRNA methyltransferase 10 homolog C, found in Rattus norvegicus (Rat).